Reading from the N-terminus, the 302-residue chain is Homoserine kinase (302 aa).

ATP is bound at residue 90 to 100 (KPGSGLGSSSA).

Belongs to the GHMP kinase family. Homoserine kinase subfamily.

The protein localises to the cytoplasm. It catalyses the reaction L-homoserine + ATP = O-phospho-L-homoserine + ADP + H(+). The protein operates within amino-acid biosynthesis; L-threonine biosynthesis; L-threonine from L-aspartate: step 4/5. Its function is as follows. Catalyzes the ATP-dependent phosphorylation of L-homoserine to L-homoserine phosphate. The sequence is that of Homoserine kinase from Methanococcus vannielii (strain ATCC 35089 / DSM 1224 / JCM 13029 / OCM 148 / SB).